The primary structure comprises 643 residues: RNA-binding protein MEX3D (643 aa).

Disordered stretches follow at residues 1–48 (MPGS…DAAA) and 61–92 (GLGGARPGDEGMATRSADGATECGEDEPAPPD). Residues 18–34 (TAGDPGHPHPALAGAED) are compositionally biased toward low complexity. Over residues 83–92 (CGEDEPAPPD) the composition is skewed to acidic residues. KH domains lie at 160-221 (MTEC…KREI) and 253-314 (QTTI…REEI). 3 disordered regions span residues 357 to 427 (PHPG…GTAT), 471 to 505 (GAPAQPNTGTRRSSGGGAATTPRHSPTLPEPGGLS), and 519 to 583 (VGAV…APGP). Gly residues predominate over residues 405 to 418 (GGSGNGGFTFGGDG). Thr-491 is subject to Phosphothreonine. Ser-495 carries the phosphoserine modification. 3 stretches are compositionally biased toward low complexity: residues 495-505 (SPTLPEPGGLS), 531-556 (LPPFSGSTTFSTTPSLPSTTLASSTL), and 567-583 (PSTTAANSSASTAAPGP). The segment at 592-632 (CVVCSEGEAMAALVPCGHNLFCMDCAVRICGKSEPECPACR) adopts an RING-type zinc-finger fold.

The protein localises to the cytoplasm. It is found in the nucleus. Functionally, RNA binding protein, may be involved in post-transcriptional regulatory mechanisms. In Mus musculus (Mouse), this protein is RNA-binding protein MEX3D (Mex3d).